The chain runs to 139 residues: HTH-type transcriptional regulator MntR (139 aa).

In terms of domain architecture, HTH dtxR-type spans 1–63 (MPTPSMEDHI…YEKYRGLTLT (63 aa)). Residues aspartate 8, glutamate 11, histidine 77, glutamate 99, glutamate 102, and histidine 103 each coordinate Mn(2+).

This sequence belongs to the DtxR/MntR family. Homodimer.

It localises to the cytoplasm. With respect to regulation, DNA binding is strongly activated by Mn(2+). In terms of biological role, central regulator of manganese homeostasis. The protein is HTH-type transcriptional regulator MntR of Lysinibacillus sphaericus (strain C3-41).